A 423-amino-acid chain; its full sequence is Cop9 signalosome complex subunit 12 (423 aa).

A PCI domain is found at 232-418 (GFFHLNEALL…RCIVFSKKEP (187 aa)).

Belongs to the CSN12 family. In terms of assembly, component of a COP9 signalosome-like (CSN) complex, composed of RRI1/CSN5, CSN9, RRI2/CSN10, PCI8/CSN11, CSN12 and CSI1. In the complex, it probably interacts directly with RRI1/CSN5, CSN9, RRI2/CSN10 and CSI1. Interacts with SEM1 and THP3.

It localises to the cytoplasm. It is found in the nucleus. In terms of biological role, component of the COP9 signalosome (CSN) complex that acts as an regulator of the ubiquitin (Ubl) conjugation pathway by mediating the deneddylation of the cullin subunit of SCF-type E3 ubiquitin-protein ligase complexes. The CSN complex is involved in the regulation of the mating pheromone response. CSN12 forms a complex with THP3 that is recruited to transcribed genes and required for transcription elongation. This is Cop9 signalosome complex subunit 12 (CSN12) from Saccharomyces cerevisiae (strain ATCC 204508 / S288c) (Baker's yeast).